Here is a 465-residue protein sequence, read N- to C-terminus: Ribulose bisphosphate carboxylase large chain (465 aa).

Lys-4 is subject to N6,N6,N6-trimethyllysine. Asn-113 and Thr-163 together coordinate substrate. The active-site Proton acceptor is the Lys-165. Lys-167 contacts substrate. Residues Lys-191, Asp-193, and Glu-194 each coordinate Mg(2+). Lys-191 is subject to N6-carboxylysine. The Proton acceptor role is filled by His-284. Arg-285, His-317, and Ser-369 together coordinate substrate.

It belongs to the RuBisCO large chain family. Type I subfamily. Heterohexadecamer of 8 large chains and 8 small chains; disulfide-linked. The disulfide link is formed within the large subunit homodimers. Requires Mg(2+) as cofactor. In terms of processing, the disulfide bond which can form in the large chain dimeric partners within the hexadecamer appears to be associated with oxidative stress and protein turnover.

It localises to the plastid. It is found in the chloroplast. The catalysed reaction is 2 (2R)-3-phosphoglycerate + 2 H(+) = D-ribulose 1,5-bisphosphate + CO2 + H2O. It catalyses the reaction D-ribulose 1,5-bisphosphate + O2 = 2-phosphoglycolate + (2R)-3-phosphoglycerate + 2 H(+). Functionally, ruBisCO catalyzes two reactions: the carboxylation of D-ribulose 1,5-bisphosphate, the primary event in carbon dioxide fixation, as well as the oxidative fragmentation of the pentose substrate in the photorespiration process. Both reactions occur simultaneously and in competition at the same active site. In Eucommia ulmoides (Hardy rubber tree), this protein is Ribulose bisphosphate carboxylase large chain.